The chain runs to 655 residues: Carboxypeptidase S1 homolog B (655 aa).

An N-terminal signal peptide occupies residues 1-21 (MRPFARAALCLLAAAGHLAQA). The cysteines at positions 51 and 123 are disulfide-linked. Asn130, Asn163, and Asn186 each carry an N-linked (GlcNAc...) asparagine glycan. The active site involves Ser240. N-linked (GlcNAc...) asparagine glycans are attached at residues Asn266, Asn302, and Asn311. Disulfide bonds link Cys328-Cys364 and Cys335-Cys357. Asn414 carries N-linked (GlcNAc...) asparagine glycosylation. Residue Asp459 is part of the active site. Cys462 serves as a coordination point for substrate. 3 N-linked (GlcNAc...) asparagine glycosylation sites follow: Asn475, Asn493, and Asn506. His517 is a catalytic residue. Residue Glu518 participates in substrate binding. N-linked (GlcNAc...) asparagine glycans are attached at residues Asn598 and Asn612. The GPI-anchor amidated glycine moiety is linked to residue Gly631. Residues 632–655 (AALVSGRIKFHVHVIKSFDYYIFI) constitute a propeptide, removed in mature form.

Belongs to the peptidase S10 family.

It is found in the cell membrane. It catalyses the reaction Preferential release of a C-terminal arginine or lysine residue.. Extracellular serine carboxypeptidase that contributes to pathogenicity. The sequence is that of Carboxypeptidase S1 homolog B (SCPB) from Arthroderma otae (strain ATCC MYA-4605 / CBS 113480) (Microsporum canis).